Reading from the N-terminus, the 285-residue chain is Phosphatidylserine decarboxylase proenzyme (285 aa).

Residues aspartate 89, histidine 146, and serine 252 each act as charge relay system; for autoendoproteolytic cleavage activity in the active site. Catalysis depends on serine 252, which acts as the Schiff-base intermediate with substrate; via pyruvic acid; for decarboxylase activity. Serine 252 is subject to Pyruvic acid (Ser); by autocatalysis.

This sequence belongs to the phosphatidylserine decarboxylase family. PSD-B subfamily. Prokaryotic type I sub-subfamily. In terms of assembly, heterodimer of a large membrane-associated beta subunit and a small pyruvoyl-containing alpha subunit. Pyruvate serves as cofactor. In terms of processing, is synthesized initially as an inactive proenzyme. Formation of the active enzyme involves a self-maturation process in which the active site pyruvoyl group is generated from an internal serine residue via an autocatalytic post-translational modification. Two non-identical subunits are generated from the proenzyme in this reaction, and the pyruvate is formed at the N-terminus of the alpha chain, which is derived from the carboxyl end of the proenzyme. The autoendoproteolytic cleavage occurs by a canonical serine protease mechanism, in which the side chain hydroxyl group of the serine supplies its oxygen atom to form the C-terminus of the beta chain, while the remainder of the serine residue undergoes an oxidative deamination to produce ammonia and the pyruvoyl prosthetic group on the alpha chain. During this reaction, the Ser that is part of the protease active site of the proenzyme becomes the pyruvoyl prosthetic group, which constitutes an essential element of the active site of the mature decarboxylase.

It localises to the cell membrane. It catalyses the reaction a 1,2-diacyl-sn-glycero-3-phospho-L-serine + H(+) = a 1,2-diacyl-sn-glycero-3-phosphoethanolamine + CO2. Its pathway is phospholipid metabolism; phosphatidylethanolamine biosynthesis; phosphatidylethanolamine from CDP-diacylglycerol: step 2/2. In terms of biological role, catalyzes the formation of phosphatidylethanolamine (PtdEtn) from phosphatidylserine (PtdSer). In Vibrio campbellii (strain ATCC BAA-1116), this protein is Phosphatidylserine decarboxylase proenzyme.